A 109-amino-acid chain; its full sequence is NADH-quinone oxidoreductase subunit K (109 aa).

Transmembrane regions (helical) follow at residues 12-32, 40-60, and 72-92; these read LNHY…GLFM, ILMS…AFSV, and IIIL…LLIY.

The protein belongs to the complex I subunit 4L family. As to quaternary structure, NDH-1 is composed of 14 different subunits. Subunits NuoA, H, J, K, L, M, N constitute the membrane sector of the complex.

Its subcellular location is the cell inner membrane. The enzyme catalyses a quinone + NADH + 5 H(+)(in) = a quinol + NAD(+) + 4 H(+)(out). In terms of biological role, NDH-1 shuttles electrons from NADH, via FMN and iron-sulfur (Fe-S) centers, to quinones in the respiratory chain. The immediate electron acceptor for the enzyme in this species is believed to be ubiquinone. Couples the redox reaction to proton translocation (for every two electrons transferred, four hydrogen ions are translocated across the cytoplasmic membrane), and thus conserves the redox energy in a proton gradient. The protein is NADH-quinone oxidoreductase subunit K of Rickettsia bellii (strain RML369-C).